The sequence spans 247 residues: Carboxy-S-adenosyl-L-methionine synthase (247 aa).

Residues Y40, 65 to 67 (GAS), 90 to 91 (DN), 122 to 123 (DI), N137, and R204 each bind S-adenosyl-L-methionine.

Belongs to the class I-like SAM-binding methyltransferase superfamily. Cx-SAM synthase family. As to quaternary structure, homodimer.

The catalysed reaction is prephenate + S-adenosyl-L-methionine = carboxy-S-adenosyl-L-methionine + 3-phenylpyruvate + H2O. In terms of biological role, catalyzes the conversion of S-adenosyl-L-methionine (SAM) to carboxy-S-adenosyl-L-methionine (Cx-SAM). This Pseudomonas putida (strain ATCC 700007 / DSM 6899 / JCM 31910 / BCRC 17059 / LMG 24140 / F1) protein is Carboxy-S-adenosyl-L-methionine synthase.